Consider the following 78-residue polypeptide: MPREIKEIKEFLIKARRKDAKSVKIKKNPTNVKFKVRCSRFLYTLVITDKEKAEKLKQSLPPGLQVKEIKCRKSKTTP.

The protein belongs to the eukaryotic ribosomal protein eL38 family.

In Maconellicoccus hirsutus (Pink hibiscus mealybug), this protein is Large ribosomal subunit protein eL38 (RpL38).